Consider the following 340-residue polypeptide: Ketol-acid reductoisomerase (NADP(+)) (340 aa).

Residues 3–183 enclose the KARI N-terminal Rossmann domain; sequence LSVYYDKDCN…GGGRTGIIET (181 aa). Residues 26-29, Ser54, and 84-87 each bind NADP(+); these read FGSQ and DELQ. His109 is an active-site residue. Gly135 is a binding site for NADP(+). The KARI C-terminal knotted domain occupies 184–329; it reads TFKDETETDL…ERLRAMMPWI (146 aa). Residues Asp192, Glu196, Glu228, and Glu232 each contribute to the Mg(2+) site. Ser253 serves as a coordination point for substrate.

This sequence belongs to the ketol-acid reductoisomerase family. It depends on Mg(2+) as a cofactor.

It carries out the reaction (2R)-2,3-dihydroxy-3-methylbutanoate + NADP(+) = (2S)-2-acetolactate + NADPH + H(+). The catalysed reaction is (2R,3R)-2,3-dihydroxy-3-methylpentanoate + NADP(+) = (S)-2-ethyl-2-hydroxy-3-oxobutanoate + NADPH + H(+). The protein operates within amino-acid biosynthesis; L-isoleucine biosynthesis; L-isoleucine from 2-oxobutanoate: step 2/4. It participates in amino-acid biosynthesis; L-valine biosynthesis; L-valine from pyruvate: step 2/4. Its function is as follows. Involved in the biosynthesis of branched-chain amino acids (BCAA). Catalyzes an alkyl-migration followed by a ketol-acid reduction of (S)-2-acetolactate (S2AL) to yield (R)-2,3-dihydroxy-isovalerate. In the isomerase reaction, S2AL is rearranged via a Mg-dependent methyl migration to produce 3-hydroxy-3-methyl-2-ketobutyrate (HMKB). In the reductase reaction, this 2-ketoacid undergoes a metal-dependent reduction by NADPH to yield (R)-2,3-dihydroxy-isovalerate. In Wolinella succinogenes (strain ATCC 29543 / DSM 1740 / CCUG 13145 / JCM 31913 / LMG 7466 / NCTC 11488 / FDC 602W) (Vibrio succinogenes), this protein is Ketol-acid reductoisomerase (NADP(+)).